A 75-amino-acid chain; its full sequence is Small ribosomal subunit protein bS18 (75 aa).

This sequence belongs to the bacterial ribosomal protein bS18 family. As to quaternary structure, part of the 30S ribosomal subunit. Forms a tight heterodimer with protein bS6.

Its function is as follows. Binds as a heterodimer with protein bS6 to the central domain of the 16S rRNA, where it helps stabilize the platform of the 30S subunit. The chain is Small ribosomal subunit protein bS18 from Shewanella baltica (strain OS223).